Consider the following 136-residue polypeptide: Protein PsiE (136 aa).

The next 4 membrane-spanning stretches (helical) occupy residues Ile15 to Leu35, Tyr55 to Val75, Phe82 to Ile102, and Pro108 to Cys128.

It belongs to the PsiE family.

Its subcellular location is the cell inner membrane. In Escherichia coli (strain UTI89 / UPEC), this protein is Protein PsiE.